The following is a 92-amino-acid chain: Small ribosomal subunit protein uS19 (92 aa).

Belongs to the universal ribosomal protein uS19 family.

Protein S19 forms a complex with S13 that binds strongly to the 16S ribosomal RNA. The chain is Small ribosomal subunit protein uS19 from Gloeothece citriformis (strain PCC 7424) (Cyanothece sp. (strain PCC 7424)).